The chain runs to 101 residues: uncharacterized protein (101 aa).

Residues 39-74 (CDERHGRPLPHSQESQHGSATSKKAVRGTADTAPLE) form a disordered region. Positions 50 to 60 (SQESQHGSATS) are enriched in polar residues.

This is an uncharacterized protein from Homo sapiens (Human).